We begin with the raw amino-acid sequence, 595 residues long: Elongation factor 4 (595 aa).

Positions 2 to 183 constitute a tr-type G domain; it reads KNIRNFCIIA…TIVEKVPAPK (182 aa). GTP is bound by residues 14 to 19 and 130 to 133; these read DHGKST and NKID.

The protein belongs to the TRAFAC class translation factor GTPase superfamily. Classic translation factor GTPase family. LepA subfamily.

It localises to the cell inner membrane. The catalysed reaction is GTP + H2O = GDP + phosphate + H(+). Its function is as follows. Required for accurate and efficient protein synthesis under certain stress conditions. May act as a fidelity factor of the translation reaction, by catalyzing a one-codon backward translocation of tRNAs on improperly translocated ribosomes. Back-translocation proceeds from a post-translocation (POST) complex to a pre-translocation (PRE) complex, thus giving elongation factor G a second chance to translocate the tRNAs correctly. Binds to ribosomes in a GTP-dependent manner. The protein is Elongation factor 4 of Parabacteroides distasonis (strain ATCC 8503 / DSM 20701 / CIP 104284 / JCM 5825 / NCTC 11152).